A 573-amino-acid polypeptide reads, in one-letter code: 60 kDa heat shock protein, mitochondrial (573 aa).

The transit peptide at 1-26 (MLRLPAVLRQIRPVSRALAPHLTRAY) directs the protein to the mitochondrion. ATP-binding positions include lysine 75 and 111-115 (DGTTT). At tyrosine 227 the chain carries Phosphotyrosine. Positions 440 and 520 each coordinate ATP.

It localises to the mitochondrion matrix. It carries out the reaction ATP + H2O + a folded polypeptide = ADP + phosphate + an unfolded polypeptide.. In terms of biological role, chaperonin implicated in mitochondrial protein import and macromolecular assembly. Together with Hsp10, facilitates the correct folding of imported proteins. May also prevent misfolding and promote the refolding and proper assembly of unfolded polypeptides generated under stress conditions in the mitochondrial matrix. The functional units of these chaperonins consist of heptameric rings of the large subunit Hsp60, which function as a back-to-back double ring. In a cyclic reaction, Hsp60 ring complexes bind one unfolded substrate protein per ring, followed by the binding of ATP and association with 2 heptameric rings of the co-chaperonin Hsp10. This leads to sequestration of the substrate protein in the inner cavity of Hsp60 where, for a certain period of time, it can fold undisturbed by other cell components. Synchronous hydrolysis of ATP in all Hsp60 subunits results in the dissociation of the chaperonin rings and the release of ADP and the folded substrate protein. This chain is 60 kDa heat shock protein, mitochondrial, found in Gallus gallus (Chicken).